A 200-amino-acid chain; its full sequence is NADH-quinone oxidoreductase subunit C (200 aa).

The protein belongs to the complex I 30 kDa subunit family. In terms of assembly, NDH-1 is composed of 14 different subunits. Subunits NuoB, C, D, E, F, and G constitute the peripheral sector of the complex.

It is found in the cell inner membrane. It carries out the reaction a quinone + NADH + 5 H(+)(in) = a quinol + NAD(+) + 4 H(+)(out). Functionally, NDH-1 shuttles electrons from NADH, via FMN and iron-sulfur (Fe-S) centers, to quinones in the respiratory chain. The immediate electron acceptor for the enzyme in this species is believed to be ubiquinone. Couples the redox reaction to proton translocation (for every two electrons transferred, four hydrogen ions are translocated across the cytoplasmic membrane), and thus conserves the redox energy in a proton gradient. The protein is NADH-quinone oxidoreductase subunit C of Ralstonia nicotianae (strain ATCC BAA-1114 / GMI1000) (Ralstonia solanacearum).